The sequence spans 464 residues: Soluble pyridine nucleotide transhydrogenase (464 aa).

Residue 35–44 participates in FAD binding; the sequence is DSRRQVGGNC.

The protein belongs to the class-I pyridine nucleotide-disulfide oxidoreductase family. FAD is required as a cofactor.

The protein resides in the cytoplasm. The enzyme catalyses NAD(+) + NADPH = NADH + NADP(+). Its function is as follows. Conversion of NADPH, generated by peripheral catabolic pathways, to NADH, which can enter the respiratory chain for energy generation. The sequence is that of Soluble pyridine nucleotide transhydrogenase from Pseudomonas fluorescens (strain ATCC BAA-477 / NRRL B-23932 / Pf-5).